The sequence spans 164 residues: FMN reductase (NADH) RutF (164 aa).

This sequence belongs to the non-flavoprotein flavin reductase family. RutF subfamily.

It carries out the reaction FMNH2 + NAD(+) = FMN + NADH + 2 H(+). Functionally, catalyzes the reduction of FMN to FMNH2 which is used to reduce pyrimidine by RutA via the Rut pathway. This Klebsiella pneumoniae (strain 342) protein is FMN reductase (NADH) RutF.